A 230-amino-acid chain; its full sequence is Modulator of macroautophagy TMEM150B-A (230 aa).

Met-1 is a topological domain (cytoplasmic). A helical membrane pass occupies residues 2-22 (WAWALLPICLTIWATAGIWIV). The Extracellular segment spans residues 23-50 (YGMSVSNGSVNLSDGFPYISLCGTDPPQ). Asn-29 and Asn-33 each carry an N-linked (GlcNAc...) asparagine glycan. A helical membrane pass occupies residues 51-71 (SCVFGQVLNVGAMLGVWISAI). The Cytoplasmic segment spans residues 72-83 (RFQQIRDYNCHS). Residues 84-104 (VLNSVSLAMGILCALGTSIVG) traverse the membrane as a helical segment. The Extracellular segment spans residues 105–115 (NFQQSNQLETH). A helical membrane pass occupies residues 116 to 136 (LAGAFLAFVIGNIYFWMQTAL). The Cytoplasmic portion of the chain corresponds to 137–150 (TYMVKPTHGGCYIG). A helical transmembrane segment spans residues 151–171 (PIRFCLSVACTALIVLMAVFL). The Extracellular portion of the chain corresponds to 172–183 (KMNMKSISAICE). Residues 184 to 204 (WIVAMILFLLYGLFAVDFWHL) traverse the membrane as a helical segment. Residues 205–230 (DGHYFHVKKRTVIPNEMQVSTVTLSI) are Cytoplasmic-facing.

Belongs to the DRAM/TMEM150 family.

Its subcellular location is the cell membrane. The protein resides in the endosome membrane. It localises to the cytoplasmic vesicle. It is found in the autophagosome membrane. Functionally, modulator of macroautophagy that causes accumulation of autophagosomes under basal conditions and enhances autophagic flux. Represses cell death and promotes long-term clonogenic survival of cells grown in the absence of glucose in a macroautophagy-independent manner. May have some role in extracellular matrix engulfment or growth factor receptor recycling, both of which can modulate cell survival. This is Modulator of macroautophagy TMEM150B-A from Xenopus laevis (African clawed frog).